Reading from the N-terminus, the 146-residue chain is Hemoglobin subunit beta (146 aa).

Valine 1 carries the post-translational modification N-acetylvaline. The Globin domain maps to 2 to 146 (HLTGEEKSAV…VATALAHKYH (145 aa)). Position 12 is a phosphothreonine (threonine 12). Serine 44 is modified (phosphoserine). Residue histidine 63 participates in heme b binding. Lysine 82 is subject to N6-acetyllysine. Histidine 92 serves as a coordination point for heme b. At cysteine 93 the chain carries S-nitrosocysteine. Lysine 144 is modified (N6-acetyllysine).

The protein belongs to the globin family. As to quaternary structure, heterotetramer of two alpha chains and two beta chains. Red blood cells.

Involved in oxygen transport from the lung to the various peripheral tissues. The chain is Hemoglobin subunit beta (HBB) from Tursiops truncatus (Atlantic bottle-nosed dolphin).